The sequence spans 78 residues: MDCCTESACSKPDDDILDIPLDDPGANAAAAKIQASFRGHMARKKIKSGECGRKGPGPGGPGGAGGARGGAGGGPSGD.

The residue at position 1 (Met-1) is an N-acetylmethionine. A disulfide bond links Cys-3 and Cys-51. In terms of domain architecture, IQ spans 26–47 (ANAAAAKIQASFRGHMARKKIK). Position 36 is a phosphoserine; by PHK and PKC (Ser-36). A disordered region spans residues 39–78 (GHMARKKIKSGECGRKGPGPGGPGGAGGARGGAGGGPSGD). The Collagen-like domain occupies 48–78 (SGECGRKGPGPGGPGGAGGARGGAGGGPSGD). A compositionally biased stretch (gly residues) spans 54–78 (KGPGPGGPGGAGGARGGAGGGPSGD). Residue Arg-68 is modified to Citrulline; partial. Position 68 is an omega-N-methylarginine (Arg-68).

Belongs to the neurogranin family. Interacts with apo-calmodulin; this interaction decreases the affinity of calmodulin for calcium ions. Post-translationally, disulfide bond formation is redox-sensitive. The cysteine residues are readily oxidized by several nitric acid (NO) donors and other oxidants to form intramolecular disulfide. Cys-51 can form a disulfide with any other of the cysteine residues with an order of reactivity Cys-9 &gt; Cys-4 &gt; Cys-3. Phosphorylated at Ser-36 by PHK and PKC, phosphorylation prevents interaction with Calmodulin and interrupts several learning- and memory-associated functions.

It is found in the cytoplasm. The protein resides in the synapse. The protein localises to the cell projection. Its subcellular location is the dendritic spine. In terms of biological role, regulates the affinity of calmodulin for calcium. Involved in synaptic plasticity and spatial learning. The sequence is that of Neurogranin (Nrgn) from Mus musculus (Mouse).